A 407-amino-acid polypeptide reads, in one-letter code: Multidrug resistance protein MdtH (407 aa).

Helical transmembrane passes span 13–33, 88–108, 139–159, 163–183, 210–230, 247–267, 277–297, 298–318, 340–360, and 368–388; these read CFLI…FPLI, LGFI…SCML, VLML…TWLL, FKLV…FNAW, FVIY…VMLM, WMYI…TWWS, LMVG…VKNL, HTLL…EPAR, LSLA…YDIG, and LPWI…YCQF.

It belongs to the major facilitator superfamily. DHA1 family. MdtH (TC 2.A.1.2.21) subfamily.

The protein localises to the cell inner membrane. The protein is Multidrug resistance protein MdtH of Blochmanniella pennsylvanica (strain BPEN).